A 196-amino-acid chain; its full sequence is Large ribosomal subunit protein uL10 (196 aa).

Positions 167 to 196 (EKKAAEGPAEAPQPATEPPAEAPEAPADAE) are disordered.

It belongs to the universal ribosomal protein uL10 family. As to quaternary structure, part of the ribosomal stalk of the 50S ribosomal subunit. The N-terminus interacts with L11 and the large rRNA to form the base of the stalk. The C-terminus forms an elongated spine to which L12 dimers bind in a sequential fashion forming a multimeric L10(L12)X complex.

Forms part of the ribosomal stalk, playing a central role in the interaction of the ribosome with GTP-bound translation factors. The polypeptide is Large ribosomal subunit protein uL10 (Mycolicibacterium paratuberculosis (strain ATCC BAA-968 / K-10) (Mycobacterium paratuberculosis)).